A 345-amino-acid polypeptide reads, in one-letter code: Anthranilate phosphoribosyltransferase (345 aa).

5-phospho-alpha-D-ribose 1-diphosphate is bound by residues Gly-84, 87-88 (GD), Thr-92, 94-97 (NIST), 112-120 (KHGGRSVSS), and Ser-124. Gly-84 lines the anthranilate pocket. Position 96 (Ser-96) interacts with Mg(2+). Arg-170 lines the anthranilate pocket. Mg(2+) contacts are provided by Asp-229 and Glu-230.

The protein belongs to the anthranilate phosphoribosyltransferase family. As to quaternary structure, homodimer. It depends on Mg(2+) as a cofactor.

The enzyme catalyses N-(5-phospho-beta-D-ribosyl)anthranilate + diphosphate = 5-phospho-alpha-D-ribose 1-diphosphate + anthranilate. The protein operates within amino-acid biosynthesis; L-tryptophan biosynthesis; L-tryptophan from chorismate: step 2/5. In terms of biological role, catalyzes the transfer of the phosphoribosyl group of 5-phosphorylribose-1-pyrophosphate (PRPP) to anthranilate to yield N-(5'-phosphoribosyl)-anthranilate (PRA). This is Anthranilate phosphoribosyltransferase from Leptothrix cholodnii (strain ATCC 51168 / LMG 8142 / SP-6) (Leptothrix discophora (strain SP-6)).